The sequence spans 371 residues: MPHQKILMLFGLLPVATNISTWWNFGSMLLTCSMIQVLTGFFLAVHYTANINLAFSSIVHIMRDVPCGWMVQNLHAIGASMFFICIYIHIARGLYYGSYLNKETWLSGTTLLIMLMATAFFGYVLPWGQMSFWAATVITNLLTAIPYLGGTMTTWLWGGFAINDPTLTRFFALHFILPFGIISLSSLHVLLLHEEGSSNPLGTNSDIDKIPFHPYHTMKDLLMLTTTLTLLLMTISFFPDIFNDPENFSKANPLVTPQHIKPEWYFLFAYGILRSIPNKLGGALALAMSIMILFTVPFIHTSKLRSMTFRPLMQLMFWTFTSTFVLITWAATKPVEPPFISISQVASIIYFTFFISNPILGWAENKIMKNT.

A run of 4 helical transmembrane segments spans residues 25 to 45 (FGSMLLTCSMIQVLTGFFLAV), 69 to 90 (WMVQNLHAIGASMFFICIYIHI), 105 to 125 (WLSGTTLLIMLMATAFFGYVL), and 170 to 190 (FFALHFILPFGIISLSSLHVL). His75 and His89 together coordinate heme b. 2 residues coordinate heme b: His174 and His188. His193 serves as a coordination point for a ubiquinone. The next 4 helical transmembrane spans lie at 218–238 (MKDLLMLTTTLTLLLMTISFF), 280–300 (LGGALALAMSIMILFTVPFIH), 312–332 (LMQLMFWTFTSTFVLITWAAT), and 339–358 (FISISQVASIIYFTFFISNP).

The protein belongs to the cytochrome b family. The cytochrome bc1 complex contains 3 respiratory subunits (MT-CYB, CYC1 and UQCRFS1), 2 core proteins (UQCRC1 and UQCRC2) and probably 6 low-molecular weight proteins. Heme b serves as cofactor.

It localises to the mitochondrion inner membrane. Functionally, component of the ubiquinol-cytochrome c reductase complex (complex III or cytochrome b-c1 complex) that is part of the mitochondrial respiratory chain. The b-c1 complex mediates electron transfer from ubiquinol to cytochrome c. Contributes to the generation of a proton gradient across the mitochondrial membrane that is then used for ATP synthesis. In Boa constrictor (Boa), this protein is Cytochrome b (MT-CYB).